An 89-amino-acid chain; its full sequence is MANIKSAKKRAKQTVVRNARNVAQRSMLRTAVKKVIKALDANDAAGAQAAFAVAQPILDRFSARGLIHKNKAARHKSRLNDRIKALAAA.

Belongs to the bacterial ribosomal protein bS20 family.

Functionally, binds directly to 16S ribosomal RNA. This Stenotrophomonas maltophilia (strain R551-3) protein is Small ribosomal subunit protein bS20.